A 371-amino-acid chain; its full sequence is Peptide chain release factor 2 (371 aa).

Gln252 carries the post-translational modification N5-methylglutamine.

The protein belongs to the prokaryotic/mitochondrial release factor family. Methylated by PrmC. Methylation increases the termination efficiency of RF2.

The protein resides in the cytoplasm. Its function is as follows. Peptide chain release factor 2 directs the termination of translation in response to the peptide chain termination codons UGA and UAA. The sequence is that of Peptide chain release factor 2 from Staphylococcus haemolyticus (strain JCSC1435).